A 782-amino-acid polypeptide reads, in one-letter code: Coiled-coil alpha-helical rod protein 1 (782 aa).

Basic and acidic residues-rich tracts occupy residues 62 to 74 (ERDVSSDRQEPGR) and 208 to 218 (ETRRAGEAKEL). 2 disordered regions span residues 62–82 (ERDVSSDRQEPGRRGRSWGLE) and 185–218 (AHKEALSSLTSKAEGLEKSLSSLETRRAGEAKEL). 3 coiled-coil regions span residues 82–314 (EGSQ…ELTR), 344–398 (LMVQ…EVER), and 498–691 (VTDV…QQEG).

It localises to the cytoplasm. It is found in the nucleus. Functionally, may be a regulator of keratinocyte proliferation or differentiation. The sequence is that of Coiled-coil alpha-helical rod protein 1 (CCHCR1) from Gorilla gorilla gorilla (Western lowland gorilla).